Reading from the N-terminus, the 511-residue chain is Phenylalanine--tRNA ligase alpha subunit (511 aa).

L-phenylalanine is bound by residues T352, Q390 to E392, Y429, and F455.

The protein belongs to the class-II aminoacyl-tRNA synthetase family. Phe-tRNA synthetase alpha subunit type 2 subfamily. In terms of assembly, tetramer of two alpha and two beta subunits. Requires Mg(2+) as cofactor.

The protein localises to the cytoplasm. It carries out the reaction tRNA(Phe) + L-phenylalanine + ATP = L-phenylalanyl-tRNA(Phe) + AMP + diphosphate + H(+). The chain is Phenylalanine--tRNA ligase alpha subunit from Methanothermobacter thermautotrophicus (strain ATCC 29096 / DSM 1053 / JCM 10044 / NBRC 100330 / Delta H) (Methanobacterium thermoautotrophicum).